Reading from the N-terminus, the 1000-residue chain is Lysine-specific histone demethylase 1 (1000 aa).

A disordered region spans residues arginine 104 to arginine 123. Residues alanine 107 to valine 137 are a coiled coil. The SWIRM domain occupies cysteine 153–leucine 249. Residues valine 260–alanine 302, glutamate 301, and leucine 328–alanine 329 contribute to the FAD site. Residues leucine 279–aspartate 950 form a demethylase activity region. Residues isoleucine 434–threonine 529 are a coiled coil. Residues threonine 780 to lysine 800 form a disordered region. Positions serine 841–glutamine 921 form a DNA-binding region, HMG box. Residue alanine 908–arginine 909 participates in FAD binding. Basic and acidic residues predominate over residues glutamate 959 to methionine 972. Residues glutamate 959–serine 1000 are disordered. Over residues asparagine 976–isoleucine 991 the composition is skewed to acidic residues.

It belongs to the flavin monoamine oxidase family. Component of the SWM histone demethylase complex composed of at least lsd1, lsd2, phf1 and phf2. Interacts directly with lsd2. It depends on FAD as a cofactor.

Its subcellular location is the nucleus. In terms of biological role, catalytic component of the SWM histone demethylase complex that specifically demethylates H3K9me2, a specific tag for epigenetic transcriptional activation, thereby acting as a corepressor. Acts by oxidizing the substrate by FAD to generate the corresponding imine that is subsequently hydrolyzed. Has a role in regulating heterochromatin propagation and euchromatic transcription. Also has a gene activating role. The polypeptide is Lysine-specific histone demethylase 1 (lsd1) (Schizosaccharomyces pombe (strain 972 / ATCC 24843) (Fission yeast)).